A 294-amino-acid chain; its full sequence is Shikimate dehydrogenase (NADP(+)) (294 aa).

Shikimate-binding positions include 23 to 25 (SRS) and T70. K74 acts as the Proton acceptor in catalysis. The shikimate site is built by N95 and D110. NADP(+) contacts are provided by residues 135 to 139 (GAGGA), 159 to 164 (NRTASR), and M232. Y234 is a shikimate binding site. An NADP(+)-binding site is contributed by G255.

Belongs to the shikimate dehydrogenase family. In terms of assembly, homodimer.

The catalysed reaction is shikimate + NADP(+) = 3-dehydroshikimate + NADPH + H(+). It functions in the pathway metabolic intermediate biosynthesis; chorismate biosynthesis; chorismate from D-erythrose 4-phosphate and phosphoenolpyruvate: step 4/7. Functionally, involved in the biosynthesis of the chorismate, which leads to the biosynthesis of aromatic amino acids. Catalyzes the reversible NADPH linked reduction of 3-dehydroshikimate (DHSA) to yield shikimate (SA). This Cupriavidus pinatubonensis (strain JMP 134 / LMG 1197) (Cupriavidus necator (strain JMP 134)) protein is Shikimate dehydrogenase (NADP(+)).